Here is a 347-residue protein sequence, read N- to C-terminus: Phenylalanine--tRNA ligase alpha subunit (347 aa).

Mg(2+) is bound at residue Glu-265.

Belongs to the class-II aminoacyl-tRNA synthetase family. Phe-tRNA synthetase alpha subunit type 1 subfamily. As to quaternary structure, tetramer of two alpha and two beta subunits. Requires Mg(2+) as cofactor.

Its subcellular location is the cytoplasm. The enzyme catalyses tRNA(Phe) + L-phenylalanine + ATP = L-phenylalanyl-tRNA(Phe) + AMP + diphosphate + H(+). This Wolbachia pipientis subsp. Culex pipiens (strain wPip) protein is Phenylalanine--tRNA ligase alpha subunit.